We begin with the raw amino-acid sequence, 227 residues long: Protein PhlB (227 aa).

Residues M1–Q35 form the signal peptide. ANK repeat units follow at residues R75 to A104, D108 to V137, T142 to L171, and L175 to R204.

In terms of biological role, cell-protective protein that neutralizes the intracellular lysis capacity of phospholipase A1 through a direct interaction with the enzyme. This Serratia liquefaciens protein is Protein PhlB (phlB).